A 438-amino-acid chain; its full sequence is GTPase Der (438 aa).

2 EngA-type G domains span residues 4 to 168 (PLVT…KSEG) and 177 to 352 (IKIA…DNYS). Residues 10-17 (GRPNVGKS), 57-61 (DTGGI), 120-123 (NKID), 183-190 (GKPNVGKS), 230-234 (DTAGL), and 295-298 (NKWD) contribute to the GTP site. Positions 353-437 (KRIATGVLND…GIKMIFKERK (85 aa)) constitute a KH-like domain.

This sequence belongs to the TRAFAC class TrmE-Era-EngA-EngB-Septin-like GTPase superfamily. EngA (Der) GTPase family. Associates with the 50S ribosomal subunit.

In terms of biological role, GTPase that plays an essential role in the late steps of ribosome biogenesis. The chain is GTPase Der from Clostridium acetobutylicum (strain ATCC 824 / DSM 792 / JCM 1419 / IAM 19013 / LMG 5710 / NBRC 13948 / NRRL B-527 / VKM B-1787 / 2291 / W).